A 777-amino-acid chain; its full sequence is Phosphate transporter PHO1 homolog 10 (777 aa).

Residues Met-1–Lys-322 enclose the SPX domain. The Cytoplasmic portion of the chain corresponds to Met-1–Arg-372. The chain crosses the membrane as a helical span at residues Val-373 to Phe-393. Residues Lys-394–Glu-408 lie on the Extracellular side of the membrane. Residues Tyr-409–Met-429 form a helical membrane-spanning segment. Residues Tyr-430–Arg-459 lie on the Cytoplasmic side of the membrane. A helical membrane pass occupies residues Glu-460 to Leu-480. Residues Gln-481 to Glu-496 are Extracellular-facing. The helical transmembrane segment at Val-497–Ile-517 threads the bilayer. Over Tyr-518–Met-646 the chain is Cytoplasmic. The EXS domain occupies His-581–Lys-775. A helical transmembrane segment spans residues Ile-647–Ile-667. At Asp-668–Ser-691 the chain is on the extracellular side. Residues Val-692 to Leu-712 traverse the membrane as a helical segment. At Glu-713–Asp-777 the chain is on the cytoplasmic side.

This sequence belongs to the SYG1 (TC 2.A.94) family. As to expression, expressed in root epidermis and cortex, leaf blades and hydathodes, stems and flowers.

Its subcellular location is the cell membrane. Functionally, may transport inorganic phosphate (Pi). The chain is Phosphate transporter PHO1 homolog 10 (PHO1-H10) from Arabidopsis thaliana (Mouse-ear cress).